The primary structure comprises 323 residues: Beta-ketoacyl-[acyl-carrier-protein] synthase III (323 aa).

Catalysis depends on residues Cys-113 and His-250. The tract at residues 251 to 255 is ACP-binding; it reads QANRR. The active site involves Asn-280.

The protein belongs to the thiolase-like superfamily. FabH family. As to quaternary structure, homodimer.

It is found in the cytoplasm. It carries out the reaction malonyl-[ACP] + acetyl-CoA + H(+) = 3-oxobutanoyl-[ACP] + CO2 + CoA. It functions in the pathway lipid metabolism; fatty acid biosynthesis. Functionally, catalyzes the condensation reaction of fatty acid synthesis by the addition to an acyl acceptor of two carbons from malonyl-ACP. Catalyzes the first condensation reaction which initiates fatty acid synthesis and may therefore play a role in governing the total rate of fatty acid production. Possesses both acetoacetyl-ACP synthase and acetyl transacylase activities. Its substrate specificity determines the biosynthesis of branched-chain and/or straight-chain of fatty acids. The sequence is that of Beta-ketoacyl-[acyl-carrier-protein] synthase III from Rhizobium meliloti (strain 1021) (Ensifer meliloti).